The following is a 319-amino-acid chain: Ribonucleoside-diphosphate reductase small chain (319 aa).

Aspartate 70, glutamate 101, and histidine 104 together coordinate Fe cation. The active site involves tyrosine 108. Fe cation-binding residues include glutamate 163, glutamate 197, and histidine 200. The segment at 313–319 (FSLDVDF) is interaction with R1.

The protein belongs to the ribonucleoside diphosphate reductase small chain family. In terms of assembly, interacts with RNR1/OPG080 subunit. Can interact with host RNR1 supunit. Fe cation is required as a cofactor.

The catalysed reaction is a 2'-deoxyribonucleoside 5'-diphosphate + [thioredoxin]-disulfide + H2O = a ribonucleoside 5'-diphosphate + [thioredoxin]-dithiol. Its function is as follows. Ribonucleoside-diphosphate reductase holoenzyme provides the precursors necessary for viral DNA synthesis. Allows virus growth in non-dividing cells. Catalyzes the biosynthesis of deoxyribonucleotides from the corresponding ribonucleotides. The chain is Ribonucleoside-diphosphate reductase small chain (OPG048) from Variola virus.